Here is a 291-residue protein sequence, read N- to C-terminus: ATP synthase gamma chain (291 aa).

The protein belongs to the ATPase gamma chain family. In terms of assembly, F-type ATPases have 2 components, CF(1) - the catalytic core - and CF(0) - the membrane proton channel. CF(1) has five subunits: alpha(3), beta(3), gamma(1), delta(1), epsilon(1). CF(0) has three main subunits: a, b and c.

It localises to the cell inner membrane. Functionally, produces ATP from ADP in the presence of a proton gradient across the membrane. The gamma chain is believed to be important in regulating ATPase activity and the flow of protons through the CF(0) complex. This Neisseria meningitidis serogroup C / serotype 2a (strain ATCC 700532 / DSM 15464 / FAM18) protein is ATP synthase gamma chain.